Here is a 520-residue protein sequence, read N- to C-terminus: Laccase-4 (520 aa).

Positions 1 to 18 are cleaved as a signal peptide; that stretch reads MGRFSSLCALTAVIHSFG. Plastocyanin-like domains follow at residues 24–149, 161–303, and 370–491; these read IGPV…MVVY, VDDE…ILRY, and TVPV…FSED. Residues Asn73 and Asn76 are each glycosylated (N-linked (GlcNAc...) asparagine). Residues His86, His88, His131, and His133 each contribute to the Cu cation site. 2 cysteine pairs are disulfide-bonded: Cys107-Cys509 and Cys139-Cys227. N-linked (GlcNAc...) asparagine glycans are attached at residues Asn239 and Asn399. Positions 418, 421, 423, 473, 474, 475, and 479 each coordinate Cu cation. N-linked (GlcNAc...) asparagine glycosylation is present at Asn497.

It belongs to the multicopper oxidase family. Homodimer. It depends on Cu cation as a cofactor.

The protein localises to the secreted. The catalysed reaction is 4 hydroquinone + O2 = 4 benzosemiquinone + 2 H2O. Functionally, lignin degradation and detoxification of lignin-derived products. This Trametes villosa (White-rot fungus) protein is Laccase-4 (LCC4).